The chain runs to 207 residues: Guanylate kinase (207 aa).

One can recognise a Guanylate kinase-like domain in the interval 5–185 (GFVLLISGPS…SYEALRAILI (181 aa)). 12–19 (GPSGAGKS) provides a ligand contact to ATP.

The protein belongs to the guanylate kinase family.

It is found in the cytoplasm. The catalysed reaction is GMP + ATP = GDP + ADP. In terms of biological role, essential for recycling GMP and indirectly, cGMP. The chain is Guanylate kinase (gmk) from Campylobacter jejuni subsp. jejuni serotype O:2 (strain ATCC 700819 / NCTC 11168).